The primary structure comprises 328 residues: Phenylalanine--tRNA ligase alpha subunit (328 aa).

Mg(2+) is bound at residue E253.

Belongs to the class-II aminoacyl-tRNA synthetase family. Phe-tRNA synthetase alpha subunit type 1 subfamily. In terms of assembly, tetramer of two alpha and two beta subunits. Mg(2+) is required as a cofactor.

It is found in the cytoplasm. The enzyme catalyses tRNA(Phe) + L-phenylalanine + ATP = L-phenylalanyl-tRNA(Phe) + AMP + diphosphate + H(+). This is Phenylalanine--tRNA ligase alpha subunit from Coxiella burnetii (strain CbuG_Q212) (Coxiella burnetii (strain Q212)).